A 366-amino-acid chain; its full sequence is Probable trehalose-phosphate phosphatase 3 (366 aa).

Belongs to the trehalose phosphatase family. A divalent metal cation serves as cofactor.

It catalyses the reaction alpha,alpha-trehalose 6-phosphate + H2O = alpha,alpha-trehalose + phosphate. The protein operates within glycan biosynthesis; trehalose biosynthesis. Its function is as follows. Removes the phosphate from trehalose 6-phosphate to produce free trehalose. Trehalose accumulation in plant may improve abiotic stress tolerance. In Oryza sativa subsp. japonica (Rice), this protein is Probable trehalose-phosphate phosphatase 3 (TPP3).